A 411-amino-acid polypeptide reads, in one-letter code: Fructose-1,6-bisphosphatase, chloroplastic (411 aa).

The N-terminal 53 residues, Met1–Met53, are a transit peptide targeting the chloroplast. Mg(2+) is bound by residues Glu133, Glu162, Asp183, Leu185, and Asp186. A substrate-binding site is contributed by Asp186–Ser189. Cys227 and Cys232 are disulfide-bonded. The substrate site is built by Asn291, Tyr323, Tyr341, Tyr343, and Lys353. Mg(2+) is bound at residue Glu359.

Belongs to the FBPase class 1 family. In terms of assembly, homotetramer. Requires Mg(2+) as cofactor.

It is found in the plastid. It localises to the chloroplast stroma. The enzyme catalyses beta-D-fructose 1,6-bisphosphate + H2O = beta-D-fructose 6-phosphate + phosphate. The protein operates within carbohydrate biosynthesis; Calvin cycle. The sequence is that of Fructose-1,6-bisphosphatase, chloroplastic (FBP) from Brassica napus (Rape).